The following is a 264-amino-acid chain: MTDTAQILPTTLEQNPQNTSKKPLLGVNVDHVATLRQARGVGYPSPLAAALLCEKAGADGITIHLREDRRHIQDADVYEMAGQLTTRMNLEMAATTEMLDIACQVKPYWVCLVPEKRAELTTEGGLDVAGQLASLTDYVSQLQAAGIKVSLFIDPEDKQIEAAVNCSADAIELHTGSYAEAGLAGKTDRVNVELERIKNAVITAKRLDSKLLVNAGHGLTRDNVHAIAQIDGIYELNIGHALIADALFVGIEQAVIMMKTAMHR.

Residues 1-21 (MTDTAQILPTTLEQNPQNTSK) show a composition bias toward polar residues. Positions 1-22 (MTDTAQILPTTLEQNPQNTSKK) are disordered. Residue asparagine 28 coordinates 3-amino-2-oxopropyl phosphate. Residue 30–31 (DH) coordinates 1-deoxy-D-xylulose 5-phosphate. Arginine 39 contacts 3-amino-2-oxopropyl phosphate. Residue histidine 64 is the Proton acceptor of the active site. 2 residues coordinate 1-deoxy-D-xylulose 5-phosphate: arginine 66 and histidine 71. The active-site Proton acceptor is glutamate 91. Residue threonine 121 coordinates 1-deoxy-D-xylulose 5-phosphate. Histidine 217 (proton donor) is an active-site residue. 3-amino-2-oxopropyl phosphate contacts are provided by residues glycine 218 and 239-240 (GH).

It belongs to the PNP synthase family. In terms of assembly, homooctamer; tetramer of dimers.

It is found in the cytoplasm. It catalyses the reaction 3-amino-2-oxopropyl phosphate + 1-deoxy-D-xylulose 5-phosphate = pyridoxine 5'-phosphate + phosphate + 2 H2O + H(+). It functions in the pathway cofactor biosynthesis; pyridoxine 5'-phosphate biosynthesis; pyridoxine 5'-phosphate from D-erythrose 4-phosphate: step 5/5. Functionally, catalyzes the complicated ring closure reaction between the two acyclic compounds 1-deoxy-D-xylulose-5-phosphate (DXP) and 3-amino-2-oxopropyl phosphate (1-amino-acetone-3-phosphate or AAP) to form pyridoxine 5'-phosphate (PNP) and inorganic phosphate. In Psychrobacter cryohalolentis (strain ATCC BAA-1226 / DSM 17306 / VKM B-2378 / K5), this protein is Pyridoxine 5'-phosphate synthase.